The sequence spans 297 residues: uncharacterized protein (297 aa).

The segment at 175–199 is disordered; that stretch reads VLPTNRNNPVRSNVDIKPVNPPSSK. The span at 176-185 shows a compositional bias: polar residues; the sequence is LPTNRNNPVR. Asparagine 269 carries N-linked (GlcNAc...) asparagine; by host glycosylation. Residues 277-297 traverse the membrane as a helical segment; sequence LFGSPVLLICVASLLLLIIIL.

This sequence belongs to the ascovirus HvAV ORF18 family.

It is found in the membrane. This is an uncharacterized protein from Noctuidae (owlet moths).